The sequence spans 132 residues: Small ribosomal subunit protein uS8 (132 aa).

Belongs to the universal ribosomal protein uS8 family. As to quaternary structure, part of the 30S ribosomal subunit. Contacts proteins S5 and S12.

Functionally, one of the primary rRNA binding proteins, it binds directly to 16S rRNA central domain where it helps coordinate assembly of the platform of the 30S subunit. The protein is Small ribosomal subunit protein uS8 of Maricaulis maris (strain MCS10) (Caulobacter maris).